We begin with the raw amino-acid sequence, 364 residues long: Sorbitol dehydrogenase (364 aa).

C54 contributes to the Zn(2+) binding site. Y60 provides a ligand contact to substrate. Zn(2+) contacts are provided by H79 and E80. E165 provides a ligand contact to substrate. Residues I193, D213, R218, 284 to 286, and 308 to 310 each bind NAD(+); these read VGM and VFR. Substrate-binding residues include R310 and Y311.

It belongs to the zinc-containing alcohol dehydrogenase family. As to quaternary structure, homotetramer. Requires Zn(2+) as cofactor. In terms of tissue distribution, mostly expressed in dry seeds and leaves, and, to a lower extent, in roots, stems, flowers and siliques (at protein level).

Its subcellular location is the mitochondrion membrane. The protein localises to the cell membrane. It localises to the cytoplasm. The protein resides in the cytosol. The enzyme catalyses keto-D-fructose + NADH + H(+) = D-sorbitol + NAD(+). It carries out the reaction ribitol + NAD(+) = D-ribulose + NADH + H(+). The catalysed reaction is xylitol + NAD(+) = D-xylulose + NADH + H(+). Functionally, polyol dehydrogenase that catalyzes the NAD(+)-dependent oxidation of various sugar alcohols. Is mostly active with D-sorbitol (D-glucitol), ribitol and xylitol as substrates, leading to the C2-oxidized products D-fructose, D-ribulose and D-xylulose, respectively. To a lesser extent, can also oxidize arabitol, mannitol, lactitol and maltitol in vitro. Is required for sorbitol metabolism. Cannot use NADP(+) as the electron acceptor. In Arabidopsis thaliana (Mouse-ear cress), this protein is Sorbitol dehydrogenase (SDH).